Consider the following 128-residue polypeptide: Azurin (128 aa).

One can recognise a Plastocyanin-like domain in the interval 1 to 128; it reads AECKVTVDST…SMMKGTVTLK (128 aa). An intrachain disulfide couples C3 to C26. Residues H46, C112, H117, and M121 each contribute to the Cu cation site.

Its subcellular location is the periplasm. In terms of biological role, transfers electrons from cytochrome c551 to cytochrome oxidase. The protein is Azurin of Pseudomonas putida (Arthrobacter siderocapsulatus).